Here is a 429-residue protein sequence, read N- to C-terminus: 3-phosphoshikimate 1-carboxyvinyltransferase (429 aa).

Positions 11, 12, and 16 each coordinate 3-phosphoshikimate. Lys-11 is a phosphoenolpyruvate binding site. Residues Gly-82 and Arg-110 each contribute to the phosphoenolpyruvate site. 3-phosphoshikimate-binding residues include Ser-155, Gln-157, Asp-302, and Lys-329. Phosphoenolpyruvate is bound at residue Gln-157. Asp-302 serves as the catalytic Proton acceptor. Phosphoenolpyruvate contacts are provided by Arg-333 and Arg-385.

Belongs to the EPSP synthase family. Monomer.

It is found in the cytoplasm. The enzyme catalyses 3-phosphoshikimate + phosphoenolpyruvate = 5-O-(1-carboxyvinyl)-3-phosphoshikimate + phosphate. Its pathway is metabolic intermediate biosynthesis; chorismate biosynthesis; chorismate from D-erythrose 4-phosphate and phosphoenolpyruvate: step 6/7. Catalyzes the transfer of the enolpyruvyl moiety of phosphoenolpyruvate (PEP) to the 5-hydroxyl of shikimate-3-phosphate (S3P) to produce enolpyruvyl shikimate-3-phosphate and inorganic phosphate. This chain is 3-phosphoshikimate 1-carboxyvinyltransferase, found in Helicobacter pylori (strain G27).